Consider the following 87-residue polypeptide: Small ribosomal subunit protein bS20 (87 aa).

The segment at 1–27 (MANIKSAKKRALQSEKRRQHNASRRSM) is disordered.

Belongs to the bacterial ribosomal protein bS20 family.

Its function is as follows. Binds directly to 16S ribosomal RNA. This is Small ribosomal subunit protein bS20 from Aeromonas hydrophila subsp. hydrophila (strain ATCC 7966 / DSM 30187 / BCRC 13018 / CCUG 14551 / JCM 1027 / KCTC 2358 / NCIMB 9240 / NCTC 8049).